Here is a 513-residue protein sequence, read N- to C-terminus: Ectonucleoside triphosphate diphosphohydrolase 1 (513 aa).

The Cytoplasmic portion of the chain corresponds to 1–16; the sequence is MEDRRESELKVFCSKN. The helical transmembrane segment at 17–37 threads the bilayer; sequence ILSILGFSCIIAVIALLALGL. The Extracellular portion of the chain corresponds to 38 to 481; it reads TQNKALPENV…SPPLPHSTYV (444 aa). N-linked (GlcNAc...) asparagine glycosylation is present at N73. The active-site Proton acceptor is the E174. Residues N227 and N245 are each glycosylated (N-linked (GlcNAc...) asparagine). Disulfide bonds link C255/C300 and C281/C327. Residues N307 and N336 are each glycosylated (N-linked (GlcNAc...) asparagine). Cysteines 340 and 345 form a disulfide. N-linked (GlcNAc...) asparagine glycosylation is present at N373. C393 and C416 are joined by a disulfide. An N-linked (GlcNAc...) asparagine glycan is attached at N460. The chain crosses the membrane as a helical span at residues 482-502; that stretch reads FLMVLFSLILLAVIIVGIVVF. Residues 503–513 are Cytoplasmic-facing; that stretch reads HKPSYFWKDMV.

This sequence belongs to the GDA1/CD39 NTPase family. Homodimer; disulfide-linked. Ca(2+) is required as a cofactor. The cofactor is Mg(2+). In terms of processing, N-glycosylated. The N-terminus is blocked. Post-translationally, palmitoylated on Cys-13; which is required for caveola targeting.

The protein localises to the membrane. The protein resides in the caveola. It catalyses the reaction a ribonucleoside 5'-triphosphate + 2 H2O = a ribonucleoside 5'-phosphate + 2 phosphate + 2 H(+). The enzyme catalyses a ribonucleoside 5'-triphosphate + H2O = a ribonucleoside 5'-diphosphate + phosphate + H(+). It carries out the reaction a ribonucleoside 5'-diphosphate + H2O = a ribonucleoside 5'-phosphate + phosphate + H(+). The catalysed reaction is ATP + 2 H2O = AMP + 2 phosphate + 2 H(+). It catalyses the reaction ATP + H2O = ADP + phosphate + H(+). The enzyme catalyses ADP + H2O = AMP + phosphate + H(+). It carries out the reaction CTP + 2 H2O = CMP + 2 phosphate + 2 H(+). The catalysed reaction is CTP + H2O = CDP + phosphate + H(+). It catalyses the reaction CDP + H2O = CMP + phosphate + H(+). The enzyme catalyses GTP + 2 H2O = GMP + 2 phosphate + 2 H(+). It carries out the reaction GTP + H2O = GDP + phosphate + H(+). The catalysed reaction is GDP + H2O = GMP + phosphate + H(+). It catalyses the reaction ITP + 2 H2O = IMP + 2 phosphate + 2 H(+). The enzyme catalyses ITP + H2O = IDP + phosphate + H(+). It carries out the reaction IDP + H2O = IMP + phosphate + H(+). The catalysed reaction is UTP + 2 H2O = UMP + 2 phosphate + 2 H(+). It catalyses the reaction UTP + H2O = UDP + phosphate + H(+). The enzyme catalyses UDP + H2O = UMP + phosphate + H(+). Functionally, catalyzes the hydrolysis of both di- and triphosphate nucleotides (NDPs and NTPs) and hydrolyze NTPs to nucleotide monophosphates (NMPs) in two distinct successive phosphate-releasing steps, with NDPs as intermediates and participates in the regulation of extracellular levels of nucleotides. By hydrolyzing proinflammatory ATP and platelet-activating ADP to AMP, it blocks platelet aggregation and supports blood flow. The protein is Ectonucleoside triphosphate diphosphohydrolase 1 of Bos taurus (Bovine).